Consider the following 277-residue polypeptide: Glucose-6-phosphatase catalytic subunit 1 (277 aa).

Arginine 4 provides a ligand contact to substrate. 2 helical membrane-spanning segments follow: residues 39–59 (GHAM…LSIA) and 67–87 (LLYR…ELVV). Histidine 40 acts as the Proton donor in catalysis. Arginine 91 contributes to the substrate binding site. Histidine 97 acts as the Nucleophile in catalysis. The next 3 membrane-spanning stretches (helical) occupy residues 131-151 (FLIT…LKAL), 215-235 (IGCI…TFSP), and 250-270 (AVAL…IYPV). The Prevents secretion from ER signature appears at 274-277 (GKNL).

This sequence belongs to the glucose-6-phosphatase family.

It localises to the endoplasmic reticulum membrane. It catalyses the reaction D-glucose 6-phosphate + H2O = D-glucose + phosphate. Its pathway is carbohydrate biosynthesis; gluconeogenesis. In terms of biological role, hydrolyzes glucose-6-phosphate to glucose in the endoplasmic reticulum. Forms with the glucose-6-phosphate transporter (SLC37A4/G6PT) the complex responsible for glucose production in the terminal step of glycogenolysis and gluconeogenesis. Hence, it is the key enzyme in homeostatic regulation of blood glucose levels. The protein is Glucose-6-phosphatase catalytic subunit 1 (g6pc1) of Haplochromis xenognathus (Lake Victoria cichlid).